Reading from the N-terminus, the 489-residue chain is Betaine aldehyde dehydrogenase (489 aa).

Positions 26 and 93 each coordinate K(+). 150 to 152 (GAW) provides a ligand contact to NAD(+). Lys162 serves as the catalytic Charge relay system. 176–179 (KPSE) is a binding site for NAD(+). Val180 is a K(+) binding site. 229-232 (GVET) lines the NAD(+) pocket. A K(+)-binding site is contributed by Leu245. Glu251 functions as the Proton acceptor in the catalytic mechanism. Gly253, Cys285, and Glu386 together coordinate NAD(+). Cys285 (nucleophile) is an active-site residue. Cysteine sulfenic acid (-SOH) is present on Cys285. Positions 456 and 459 each coordinate K(+). Glu463 acts as the Charge relay system in catalysis.

Belongs to the aldehyde dehydrogenase family. Dimer of dimers. It depends on K(+) as a cofactor.

The enzyme catalyses betaine aldehyde + NAD(+) + H2O = glycine betaine + NADH + 2 H(+). It participates in amine and polyamine biosynthesis; betaine biosynthesis via choline pathway; betaine from betaine aldehyde: step 1/1. In terms of biological role, involved in the biosynthesis of the osmoprotectant glycine betaine. Catalyzes the irreversible oxidation of betaine aldehyde to the corresponding acid. This is Betaine aldehyde dehydrogenase from Burkholderia pseudomallei (strain K96243).